Consider the following 249-residue polypeptide: Expansin-A18 (249 aa).

An N-terminal signal peptide occupies residues 1-21 (MGNIVLQLLAILALCIAPARS). The Expansin-like EG45 domain occupies 41 to 154 (GGACGYGNLY…QQVKCWRSGG (114 aa)). N-linked (GlcNAc...) asparagine glycosylation occurs at Asn-116. An Expansin-like CBD domain is found at 164–243 (YFELVLVTNM…GWSFGQTFST (80 aa)).

Belongs to the expansin family. Expansin A subfamily. In terms of tissue distribution, expressed in roots.

Its subcellular location is the secreted. The protein resides in the cell wall. It localises to the membrane. Functionally, may cause loosening and extension of plant cell walls by disrupting non-covalent bonding between cellulose microfibrils and matrix glucans. No enzymatic activity has been found. May be required for rapid internodal elongation in deepwater rice during submergence. This is Expansin-A18 (EXPA18) from Oryza sativa subsp. japonica (Rice).